Reading from the N-terminus, the 317-residue chain is MTVYLLANFGGPRISQEIPSFLHALLTDQDVTGGRIPPWLHRPLFSYIAKRRAHRVAEQYAYLGGRSPIFQDTEKLAQNLSQELQAPVISFHRYLTETHQDTLAALRESAGDIIGIPLFPHYTFAVTGSIIRFFLERIPEKPMAWITHFGVHPQFISCMREHIQDCLIAQGIVAEDCFFLFSVHGLPMRHIRLGDPYAKQCQDSFNALIGESEGVLSFQSKFGIGEWLVPSTKEICQSLCTKKRYIVVVPFGFVSDHIETLYEIDHLYVPMLLQRGYRVVRVPAINTSDRWVSALASIVKSSPHETILEPLLMPKRR.

The Fe cation site is built by His-184 and Glu-259.

Belongs to the ferrochelatase family.

Its subcellular location is the cytoplasm. It carries out the reaction heme b + 2 H(+) = protoporphyrin IX + Fe(2+). Its pathway is porphyrin-containing compound metabolism; protoheme biosynthesis; protoheme from protoporphyrin-IX: step 1/1. In terms of biological role, catalyzes the ferrous insertion into protoporphyrin IX. The protein is Ferrochelatase of Chlamydia muridarum (strain MoPn / Nigg).